A 137-amino-acid chain; its full sequence is 5-hydroxytryptamine receptor 4 (137 aa).

The helical transmembrane segment at 12-35 (TPLRVAVLLAGCWAIPVLISFLPI) threads the bilayer. Residue asparagine 58 is glycosylated (N-linked (GlcNAc...) asparagine). A helical transmembrane segment spans residues 67-90 (NKPYAITCSVVAFYIPFLLMVLAY). The segment at 112–137 (APAEGRPPSADQHSTHRMRTETKAAK) is disordered.

The protein belongs to the G-protein coupled receptor 1 family. Interacts (via C-terminus 330-346 AA) with GRK5; this interaction is promoted by 5-HT (serotonin).

Its subcellular location is the cell membrane. The protein resides in the endosome membrane. G-protein coupled receptor for 5-hydroxytryptamine (serotonin), a biogenic hormone that functions as a neurotransmitter, a hormone and a mitogen. Ligand binding causes a conformation change that triggers signaling via guanine nucleotide-binding proteins (G proteins) and modulates the activity of downstream effectors. HTR4 is coupled to G(s) G alpha proteins and mediates activation of adenylate cyclase activity. The sequence is that of 5-hydroxytryptamine receptor 4 (HTR4) from Sus scrofa (Pig).